Here is a 444-residue protein sequence, read N- to C-terminus: MSTRVLTLTLLKKRHLMQCFWSTVGSVHLRSIASDKIPSHAVEASLYVHWPYCLKRCSYCNFNKYISRSENHDTMTECLQKETETLLKLSQVSRITSVFFGGGTPSLAQPSTIAAVLETVTKNSNLSDLAEVTLEVNPTPAGKARLKDFTLAGVNRFSIGVQSLNADHLRILGRDHSVQHALQTVSEARKLCPGRVSVDIMFALPGQSVSCWQKQLEELLYVCDDHISLYQLTLERGTQLFKQVESGKLSVPGDEVTAIMYKTACRVLEESGFHQYEVSNFARNNAVSEHNMGYWRGHQYIGVGPGAHGRFVPHGDGGVQREARTQTLEPDVWIKEVQSRGRGTRRRITLHHLQLLEEVLVMGLRMNEGITHQHWELFSPEANLQQVFGKSANIQELQGGRFLILDDRGLRCSWEGLVLLDSILPTILLELEMFFHSRGIKRTQ.

The transit peptide at 1 to 39 directs the protein to the mitochondrion; that stretch reads MSTRVLTLTLLKKRHLMQCFWSTVGSVHLRSIASDKIPS. Residues 40–274 enclose the Radical SAM core domain; sequence HAVEASLYVH…CRVLEESGFH (235 aa). S-adenosyl-L-methionine is bound at residue Y47. [4Fe-4S] cluster-binding residues include C53, C57, and C60. S-adenosyl-L-methionine-binding positions include G102, 103-104, E135, Q162, R174, and D199; that span reads GT.

It belongs to the anaerobic coproporphyrinogen-III oxidase family. HemW subfamily. It depends on [4Fe-4S] cluster as a cofactor.

The protein resides in the mitochondrion. In terms of biological role, may be a heme chaperone, appears to bind heme. Homologous bacterial proteins do not have oxygen-independent coproporphyrinogen-III oxidase activity. Binds 1 [4Fe-4S] cluster. The cluster is coordinated with 3 cysteines and an exchangeable S-adenosyl-L-methionine. The sequence is that of Radical S-adenosyl methionine domain-containing protein 1, mitochondrial (rsad1) from Danio rerio (Zebrafish).